Here is a 1488-residue protein sequence, read N- to C-terminus: Chromosome partition protein MukB (1488 aa).

34–41 serves as a coordination point for ATP; that stretch reads GGNGAGKS. Coiled-coil stretches lie at residues 326–418, 444–472, and 509–602; these read LEAD…QYNQ, LDTF…QTAH, and RHLA…QRAP. A flexible hinge region spans residues 666–783; that stretch reads PGGAEDQRLN…SLPIFGRAAR (118 aa). 3 coiled-coil regions span residues 835 to 923, 977 to 1116, and 1209 to 1265; these read EAEI…AKLE, EMLS…AKAG, and VEAI…LQSV. The interval 1049-1074 is disordered; that stretch reads ADSGAEERARQRRDELHAQLSNNRSR. Positions 1051-1065 are enriched in basic and acidic residues; the sequence is SGAEERARQRRDELH.

The protein belongs to the SMC family. MukB subfamily. Homodimerization via its hinge domain. Binds to DNA via its C-terminal region. Interacts, and probably forms a ternary complex, with MukE and MukF via its C-terminal region. The complex formation is stimulated by calcium or magnesium. Interacts with tubulin-related protein FtsZ.

Its subcellular location is the cytoplasm. It is found in the nucleoid. In terms of biological role, plays a central role in chromosome condensation, segregation and cell cycle progression. Functions as a homodimer, which is essential for chromosome partition. Involved in negative DNA supercoiling in vivo, and by this means organize and compact chromosomes. May achieve or facilitate chromosome segregation by condensation DNA from both sides of a centrally located replisome during cell division. This chain is Chromosome partition protein MukB, found in Salmonella schwarzengrund (strain CVM19633).